The following is a 250-amino-acid chain: Ribonuclease HII (250 aa).

The RNase H type-2 domain occupies 66-250; that stretch reads ELVAGVDEVG…TFAPVSDFFK (185 aa). Residues Asp72, Glu73, and Asp164 each coordinate a divalent metal cation.

The protein belongs to the RNase HII family. It depends on Mn(2+) as a cofactor. The cofactor is Mg(2+).

The protein localises to the cytoplasm. The enzyme catalyses Endonucleolytic cleavage to 5'-phosphomonoester.. Functionally, endonuclease that specifically degrades the RNA of RNA-DNA hybrids. This chain is Ribonuclease HII, found in Lactobacillus helveticus (strain DPC 4571).